The following is a 264-amino-acid chain: Glutamate racemase (264 aa).

Residues 10-11 and 42-43 contribute to the substrate site; these read DS and YG. C73 (proton donor/acceptor) is an active-site residue. 74-75 lines the substrate pocket; the sequence is NT. Residue C183 is the Proton donor/acceptor of the active site. A substrate-binding site is contributed by 184–185; the sequence is TH.

The protein belongs to the aspartate/glutamate racemases family.

The enzyme catalyses L-glutamate = D-glutamate. Its pathway is cell wall biogenesis; peptidoglycan biosynthesis. In terms of biological role, provides the (R)-glutamate required for cell wall biosynthesis. The chain is Glutamate racemase from Streptococcus uberis (strain ATCC BAA-854 / 0140J).